The sequence spans 617 residues: uncharacterized protein (617 aa).

Residues 10-30 form a helical membrane-spanning segment; it reads AFFFFFVSLILLFLSPSYSDV. The tract at residues 34-58 is disordered; sequence ESDPIPYENSDASPGVVTSSESDRQ. Over residues 43–53 the composition is skewed to polar residues; it reads SDASPGVVTSS. Residues 60–86 are a coiled coil; sequence VSLHRLEELVRNLTELVARLDAKLSET. The chain crosses the membrane as a helical span at residues 473 to 493; it reads MLWSSPVFFFILFLFGAWHFF. A compositionally biased stretch (low complexity) spans 511–529; the sequence is STTMSSSSTTTAQNSSAFS. The disordered stretch occupies residues 511-617; that stretch reads STTMSSSSTT…GNNKALDDES (107 aa). The segment covering 531-543 has biased composition (basic and acidic residues); sequence STRRNDDHMDLRR. Residues 563–584 show a composition bias toward polar residues; the sequence is VGSNDPSSRAPVETTNYRTTAQ. The segment covering 590 to 599 has biased composition (gly residues); it reads GGSGLDSGGF.

Its subcellular location is the membrane. This is an uncharacterized protein from Arabidopsis thaliana (Mouse-ear cress).